Here is a 229-residue protein sequence, read N- to C-terminus: PKHD-type hydroxylase BBta_1313 (229 aa).

A Fe2OG dioxygenase domain is found at histidine 78–serine 180. Fe cation-binding residues include histidine 98, aspartate 100, and histidine 161. Arginine 171 contacts 2-oxoglutarate.

Requires Fe(2+) as cofactor. The cofactor is L-ascorbate.

This chain is PKHD-type hydroxylase BBta_1313, found in Bradyrhizobium sp. (strain BTAi1 / ATCC BAA-1182).